We begin with the raw amino-acid sequence, 283 residues long: Polyamine aminopropyltransferase (283 aa).

Positions 2-237 constitute a PABS domain; the sequence is ELWYTEEHTD…GHWLFGFASK (236 aa). Glutamine 31 provides a ligand contact to S-methyl-5'-thioadenosine. Spermidine is bound by residues histidine 62 and aspartate 86. S-methyl-5'-thioadenosine is bound by residues glutamate 106 and 137 to 138; that span reads DG. The active-site Proton acceptor is the aspartate 155. Residue 155-158 coordinates spermidine; the sequence is DSTD. Proline 162 serves as a coordination point for S-methyl-5'-thioadenosine.

This sequence belongs to the spermidine/spermine synthase family. Homodimer or homotetramer.

The protein localises to the cytoplasm. The catalysed reaction is S-adenosyl 3-(methylsulfanyl)propylamine + putrescine = S-methyl-5'-thioadenosine + spermidine + H(+). It participates in amine and polyamine biosynthesis; spermidine biosynthesis; spermidine from putrescine: step 1/1. Functionally, catalyzes the irreversible transfer of a propylamine group from the amino donor S-adenosylmethioninamine (decarboxy-AdoMet) to putrescine (1,4-diaminobutane) to yield spermidine. This chain is Polyamine aminopropyltransferase, found in Clostridium perfringens (strain ATCC 13124 / DSM 756 / JCM 1290 / NCIMB 6125 / NCTC 8237 / Type A).